Here is a 207-residue protein sequence, read N- to C-terminus: MIDSLHGEVLHVGLNYVVIECSGVGYRATASPSLLGTLRKGEDARILVTMNVRDDGIDLYAFESDEARQMFAMLRKVSGVGPTSAMAICSIFKPDEFARIITDEDDAELRNVKGIGKRTAERIIVDLKSKVAVFDSGDSASEPQSGVGGNSEAEVDSGVVGTVTQALVELGFPEKQAEKTATSAAAEGGSVSEILKRALRSMSSERN.

Positions 1–63 (MIDSLHGEVL…DDGIDLYAFE (63 aa)) are domain I. A domain II region spans residues 64-142 (SDEARQMFAM…VFDSGDSASE (79 aa)). The interval 143-154 (PQSGVGGNSEAE) is flexible linker. The interval 155 to 207 (VDSGVVGTVTQALVELGFPEKQAEKTATSAAAEGGSVSEILKRALRSMSSERN) is domain III.

It belongs to the RuvA family. As to quaternary structure, homotetramer. Forms an RuvA(8)-RuvB(12)-Holliday junction (HJ) complex. HJ DNA is sandwiched between 2 RuvA tetramers; dsDNA enters through RuvA and exits via RuvB. An RuvB hexamer assembles on each DNA strand where it exits the tetramer. Each RuvB hexamer is contacted by two RuvA subunits (via domain III) on 2 adjacent RuvB subunits; this complex drives branch migration. In the full resolvosome a probable DNA-RuvA(4)-RuvB(12)-RuvC(2) complex forms which resolves the HJ.

It is found in the cytoplasm. Functionally, the RuvA-RuvB-RuvC complex processes Holliday junction (HJ) DNA during genetic recombination and DNA repair, while the RuvA-RuvB complex plays an important role in the rescue of blocked DNA replication forks via replication fork reversal (RFR). RuvA specifically binds to HJ cruciform DNA, conferring on it an open structure. The RuvB hexamer acts as an ATP-dependent pump, pulling dsDNA into and through the RuvAB complex. HJ branch migration allows RuvC to scan DNA until it finds its consensus sequence, where it cleaves and resolves the cruciform DNA. This Corynebacterium kroppenstedtii (strain DSM 44385 / JCM 11950 / CIP 105744 / CCUG 35717) protein is Holliday junction branch migration complex subunit RuvA.